The chain runs to 184 residues: Protein GrpE (184 aa).

The disordered stretch occupies residues 1–24; sequence MADEQLDEKNLNSEEAGAVNGDAR.

Belongs to the GrpE family. Homodimer.

It is found in the cytoplasm. In terms of biological role, participates actively in the response to hyperosmotic and heat shock by preventing the aggregation of stress-denatured proteins, in association with DnaK and GrpE. It is the nucleotide exchange factor for DnaK and may function as a thermosensor. Unfolded proteins bind initially to DnaJ; upon interaction with the DnaJ-bound protein, DnaK hydrolyzes its bound ATP, resulting in the formation of a stable complex. GrpE releases ADP from DnaK; ATP binding to DnaK triggers the release of the substrate protein, thus completing the reaction cycle. Several rounds of ATP-dependent interactions between DnaJ, DnaK and GrpE are required for fully efficient folding. This chain is Protein GrpE, found in Pseudomonas entomophila (strain L48).